We begin with the raw amino-acid sequence, 398 residues long: Glucose-1-phosphate adenylyltransferase (398 aa).

Alpha-D-glucose 1-phosphate is bound by residues tyrosine 100, glycine 165, 180 to 181 (EK), and serine 191.

The protein belongs to the bacterial/plant glucose-1-phosphate adenylyltransferase family. As to quaternary structure, homotetramer.

The catalysed reaction is alpha-D-glucose 1-phosphate + ATP + H(+) = ADP-alpha-D-glucose + diphosphate. It functions in the pathway glycan biosynthesis; glycogen biosynthesis. In terms of biological role, involved in the biosynthesis of ADP-glucose, a building block required for the elongation reactions to produce glycogen. Catalyzes the reaction between ATP and alpha-D-glucose 1-phosphate (G1P) to produce pyrophosphate and ADP-Glc. The chain is Glucose-1-phosphate adenylyltransferase from Desulfitobacterium hafniense (strain DSM 10664 / DCB-2).